The sequence spans 728 residues: Propionyl-CoA carboxylase alpha chain, mitochondrial (728 aa).

The transit peptide at 1 to 52 (MAGFWVGTAPLVAAGRRGRWPPQQLMLSAALRTLKHVLYYSRQCLMVSRNLG) directs the protein to the mitochondrion. Residues 62–509 (TFDKILVANR…STKFLSDVYP (448 aa)) form the Biotin carboxylation domain. N6-acetyllysine; alternate is present on lysine 65. The residue at position 65 (lysine 65) is an N6-succinyllysine; alternate. Lysine 119 is modified (N6-succinyllysine). Lysine 150 carries the post-translational modification N6-acetyllysine; alternate. Lysine 150 is modified (N6-succinyllysine; alternate). Lysine 177 contributes to the ATP binding site. In terms of domain architecture, ATP-grasp spans 181–378 (KLLAKKAEVN…LVQEMIRVAK (198 aa)). An N6-acetyllysine; alternate modification is found at lysine 200. Residue lysine 200 is modified to N6-succinyllysine; alternate. ATP-binding positions include 209–270 (AREI…PRHI), glutamate 261, and asparagine 296. Serine 252 carries the phosphoserine modification. Lysine 262 is modified (N6-succinyllysine). Residue lysine 328 is modified to N6-acetyllysine; alternate. Lysine 328 is subject to N6-succinyllysine; alternate. 3 residues coordinate Mg(2+): glutamate 336, glutamate 349, and asparagine 351. Mn(2+) contacts are provided by glutamate 336, glutamate 349, and asparagine 351. The active site involves glutamate 349. Residues lysine 385 and lysine 407 each carry the N6-succinyllysine modification. Phenylalanine 409 lines the biotin pocket. Lysine 496 carries the N6-acetyllysine modification. N6-succinyllysine occurs at positions 502, 513, and 648. The 76-residue stretch at 653-728 (KVTEDTSSVL…GEGDLLVELE (76 aa)) folds into the Biotinyl-binding domain. N6-biotinyllysine; by HLCS is present on lysine 694.

As to quaternary structure, the holoenzyme is a dodecamer composed of 6 PCCA/alpha subunits and 6 PCCB/beta subunits. Interacts (via the biotin carboxylation domain) with SIRT4. Interacts with SIRT3 and SIRT5. Mg(2+) is required as a cofactor. Mn(2+) serves as cofactor. The cofactor is biotin. Post-translationally, acetylated. The biotin cofactor is covalently attached to the C-terminal biotinyl-binding domain and is required for the catalytic activity. Biotinylation is catalyzed by HLCS.

It localises to the mitochondrion matrix. It catalyses the reaction propanoyl-CoA + hydrogencarbonate + ATP = (S)-methylmalonyl-CoA + ADP + phosphate + H(+). It carries out the reaction butanoyl-CoA + hydrogencarbonate + ATP = (2S)-ethylmalonyl-CoA + ADP + phosphate + H(+). It participates in metabolic intermediate metabolism; propanoyl-CoA degradation; succinyl-CoA from propanoyl-CoA: step 1/3. In terms of biological role, this is one of the 2 subunits of the biotin-dependent propionyl-CoA carboxylase (PCC), a mitochondrial enzyme involved in the catabolism of odd chain fatty acids, branched-chain amino acids isoleucine, threonine, methionine, and valine and other metabolites. Propionyl-CoA carboxylase catalyzes the carboxylation of propionyl-CoA/propanoyl-CoA to D-methylmalonyl-CoA/(S)-methylmalonyl-CoA. Within the holoenzyme, the alpha subunit catalyzes the ATP-dependent carboxylation of the biotin carried by the biotin carboxyl carrier (BCC) domain, while the beta subunit then transfers the carboxyl group from carboxylated biotin to propionyl-CoA. Propionyl-CoA carboxylase also significantly acts on butyryl-CoA/butanoyl-CoA, which is converted to ethylmalonyl-CoA/(2S)-ethylmalonyl-CoA at a much lower rate. Other alternative minor substrates include (2E)-butenoyl-CoA/crotonoyl-CoA. This Homo sapiens (Human) protein is Propionyl-CoA carboxylase alpha chain, mitochondrial.